A 219-amino-acid chain; its full sequence is tRNA (guanine-N(7)-)-methyltransferase (219 aa).

S-adenosyl-L-methionine is bound by residues Glu46, Glu71, Asn100, and Asp122. Residue Asp122 is part of the active site. Substrate contacts are provided by residues Lys126, Asp158, and 199–202; that span reads TEYE.

The protein belongs to the class I-like SAM-binding methyltransferase superfamily. TrmB family.

It carries out the reaction guanosine(46) in tRNA + S-adenosyl-L-methionine = N(7)-methylguanosine(46) in tRNA + S-adenosyl-L-homocysteine. Its pathway is tRNA modification; N(7)-methylguanine-tRNA biosynthesis. Catalyzes the formation of N(7)-methylguanine at position 46 (m7G46) in tRNA. The protein is tRNA (guanine-N(7)-)-methyltransferase of Leuconostoc citreum (strain KM20).